We begin with the raw amino-acid sequence, 224 residues long: EEF1A lysine methyltransferase 3 (224 aa).

Residues W58, 84-86, D105, W134, and A151 contribute to the S-adenosyl-L-methionine site; that span reads GAG.

The protein belongs to the methyltransferase superfamily. METTL21 family.

It localises to the cytoplasm. The protein resides in the cytoskeleton. The protein localises to the microtubule organizing center. Its subcellular location is the centrosome. It catalyses the reaction L-lysyl-[protein] + 3 S-adenosyl-L-methionine = N(6),N(6),N(6)-trimethyl-L-lysyl-[protein] + 3 S-adenosyl-L-homocysteine + 3 H(+). The enzyme catalyses L-lysyl-[protein] + S-adenosyl-L-methionine = N(6)-methyl-L-lysyl-[protein] + S-adenosyl-L-homocysteine + H(+). It carries out the reaction N(6)-methyl-L-lysyl-[protein] + S-adenosyl-L-methionine = N(6),N(6)-dimethyl-L-lysyl-[protein] + S-adenosyl-L-homocysteine + H(+). The catalysed reaction is N(6),N(6)-dimethyl-L-lysyl-[protein] + S-adenosyl-L-methionine = N(6),N(6),N(6)-trimethyl-L-lysyl-[protein] + S-adenosyl-L-homocysteine + H(+). Functionally, protein-lysine methyltransferase that selectively mono-, di- and trimethylates 'Lys-165' of the translation elongation factors EEF1A1 and EEF1A2 in an aminoacyl-tRNA and GTP-dependent manner. EEF1A1 methylation by EEF1AKMT3 is dynamic as well as inducible by stress conditions, such as ER-stress, and plays a regulatory role on mRNA translation. The polypeptide is EEF1A lysine methyltransferase 3 (Xenopus tropicalis (Western clawed frog)).